The primary structure comprises 265 residues: Ribosomal RNA small subunit methyltransferase A (265 aa).

6 residues coordinate S-adenosyl-L-methionine: His-17, Leu-19, Gly-44, Glu-65, Asp-90, and Asn-112.

Belongs to the class I-like SAM-binding methyltransferase superfamily. rRNA adenine N(6)-methyltransferase family. RsmA subfamily.

It localises to the cytoplasm. It carries out the reaction adenosine(1518)/adenosine(1519) in 16S rRNA + 4 S-adenosyl-L-methionine = N(6)-dimethyladenosine(1518)/N(6)-dimethyladenosine(1519) in 16S rRNA + 4 S-adenosyl-L-homocysteine + 4 H(+). Specifically dimethylates two adjacent adenosines (A1518 and A1519) in the loop of a conserved hairpin near the 3'-end of 16S rRNA in the 30S particle. May play a critical role in biogenesis of 30S subunits. This chain is Ribosomal RNA small subunit methyltransferase A, found in Xylella fastidiosa (strain Temecula1 / ATCC 700964).